The following is a 694-amino-acid chain: Methionine--tRNA ligase (694 aa).

The 'HIGH' region signature appears at 12–22 (PYANGPLHLGH). C143, C146, C156, and C159 together coordinate Zn(2+). Positions 330–334 (KMSKS) match the 'KMSKS' region motif. Residue K333 coordinates ATP. Over residues 550–575 (LAAPAAPATTSKAAPAKPDTKPAAAA) the composition is skewed to low complexity. A disordered region spans residues 550–580 (LAAPAAPATTSKAAPAKPDTKPAAAANPQSP). The tRNA-binding domain maps to 591–694 (DFAKLDLRIG…SGAQPGMPVR (104 aa)).

It belongs to the class-I aminoacyl-tRNA synthetase family. MetG type 1 subfamily. As to quaternary structure, homodimer. The cofactor is Zn(2+).

It is found in the cytoplasm. The catalysed reaction is tRNA(Met) + L-methionine + ATP = L-methionyl-tRNA(Met) + AMP + diphosphate. Functionally, is required not only for elongation of protein synthesis but also for the initiation of all mRNA translation through initiator tRNA(fMet) aminoacylation. This is Methionine--tRNA ligase from Xanthomonas oryzae pv. oryzae (strain MAFF 311018).